A 157-amino-acid polypeptide reads, in one-letter code: SsrA-binding protein (157 aa).

The segment at 132 to 157 (VHDKRQAQKDKDWAREKDRLFKKAYK) is disordered. Residues 135 to 157 (KRQAQKDKDWAREKDRLFKKAYK) are compositionally biased toward basic and acidic residues.

It belongs to the SmpB family.

It is found in the cytoplasm. Its function is as follows. Required for rescue of stalled ribosomes mediated by trans-translation. Binds to transfer-messenger RNA (tmRNA), required for stable association of tmRNA with ribosomes. tmRNA and SmpB together mimic tRNA shape, replacing the anticodon stem-loop with SmpB. tmRNA is encoded by the ssrA gene; the 2 termini fold to resemble tRNA(Ala) and it encodes a 'tag peptide', a short internal open reading frame. During trans-translation Ala-aminoacylated tmRNA acts like a tRNA, entering the A-site of stalled ribosomes, displacing the stalled mRNA. The ribosome then switches to translate the ORF on the tmRNA; the nascent peptide is terminated with the 'tag peptide' encoded by the tmRNA and targeted for degradation. The ribosome is freed to recommence translation, which seems to be the essential function of trans-translation. The chain is SsrA-binding protein from Francisella tularensis subsp. novicida (strain U112).